We begin with the raw amino-acid sequence, 253 residues long: Discoidin-1 subunit B/C (253 aa).

Residue Ser-2 is modified to N-acetylserine. The 151-residue stretch at 2-152 folds into the F5/8 type C domain; the sequence is STQGLVQLIS…ISLRCEFYTQ (151 aa). Positions 79–81 match the Cell attachment site motif; that stretch reads RGD.

As to quaternary structure, tetramer of four different chains (A to D). In terms of tissue distribution, stalk cells.

The protein localises to the cytoplasm. Functionally, galactose- and N-acetylgalactosamine-binding lectin. May play a role in cell-substratum adhesion rather than in cell-cell adhesion. May be necessary for the maintenance of normal elongate morphology during aggregation. This is Discoidin-1 subunit B/C (dscC-1) from Dictyostelium discoideum (Social amoeba).